We begin with the raw amino-acid sequence, 422 residues long: Mannosylglycerate synthase (422 aa).

Residues 7–11, Gln-66, Lys-77, Asp-101, and 101–102 contribute to the GDP-alpha-D-mannose site; these read PFKEE and DS. Residues Arg-132 and 137 to 140 contribute to the (R)-glycerate site; that span reads AMIT. Residues Leu-164, Asp-193, and Tyr-221 each coordinate GDP-alpha-D-mannose.

Belongs to the glycosyltransferase 78 family.

It carries out the reaction (R)-glycerate + GDP-alpha-D-mannose = (2R)-2-O-(alpha-D-mannosyl)-glycerate + GDP + H(+). The enzyme catalyses GDP-alpha-D-glucose + (R)-glycerate = (2R)-2-O-(alpha-D-glucopyranosyl)-glycerate + GDP + H(+). Its activity is regulated as follows. Activity is not dependent on divalent cations, but it is enhanced by Mg(2+). In terms of biological role, involved in the biosynthesis of the compatible solute alpha-D-mannosyl-glycerate (MG). Catalyzes the condensation of GDP-alpha-D-mannose (GDP-Man) with D-glycerate to produce alpha-D-mannosyl-glycerate. Can also use GDP-alpha-D-glucose (GDP-Glc) as sugar donor to produce alpha-D-glucopyranosyl-glycerate (GG). The sequence is that of Mannosylglycerate synthase from Selaginella moellendorffii (Spikemoss).